Consider the following 481-residue polypeptide: Trigger factor (481 aa).

The region spanning 161–298 (GDQLTATVQT…VSEIQNRQLP (138 aa)) is the PPIase FKBP-type domain. A disordered region spans residues 173 to 245 (DGVPLHKLDE…PTTLIMEERR (73 aa)). A compositionally biased stretch (acidic residues) spans 182 to 235 (EEDDDDDDDDDDDDDDDDDDDDDDDDDDDDDDDDDDDDDDDDDDDDDDDDDEGE).

The protein belongs to the FKBP-type PPIase family. Tig subfamily.

The protein localises to the cytoplasm. The enzyme catalyses [protein]-peptidylproline (omega=180) = [protein]-peptidylproline (omega=0). Involved in protein export. Acts as a chaperone by maintaining the newly synthesized protein in an open conformation. Functions as a peptidyl-prolyl cis-trans isomerase. The chain is Trigger factor from Herpetosiphon aurantiacus (strain ATCC 23779 / DSM 785 / 114-95).